A 124-amino-acid chain; its full sequence is Small ribosomal subunit protein uS12 (124 aa).

Aspartate 89 carries the post-translational modification 3-methylthioaspartic acid.

The protein belongs to the universal ribosomal protein uS12 family. In terms of assembly, part of the 30S ribosomal subunit. Contacts proteins S8 and S17. May interact with IF1 in the 30S initiation complex.

Its function is as follows. With S4 and S5 plays an important role in translational accuracy. Interacts with and stabilizes bases of the 16S rRNA that are involved in tRNA selection in the A site and with the mRNA backbone. Located at the interface of the 30S and 50S subunits, it traverses the body of the 30S subunit contacting proteins on the other side and probably holding the rRNA structure together. The combined cluster of proteins S8, S12 and S17 appears to hold together the shoulder and platform of the 30S subunit. The sequence is that of Small ribosomal subunit protein uS12 from Shewanella frigidimarina (strain NCIMB 400).